Here is a 519-residue protein sequence, read N- to C-terminus: MAKAATPKRAPARAAAIPAAATPAAKPAKRASTRSAAARSPIAAATASGKIGSVRQVIGAVVDVQFQENLPAILNALETDNQGNRLVLEVAQHLGENTVRCIAMDSTDGLVRGQEVRDTGAPISVPVGPEMLGRIINVIGEPVDEAGPITATEFRGIHQPAPEYVEQSTEAQILVTGIKVLDLLAPYARGGKIGLFGGAGVGKTVLIQELINNVAKAHGGYSVFAGVGERTREGNDLYHEFIESGVNKKGGGEGSKAALVYGQMNEPPGARARVGLTGLTVAEYFRDQGQDVLFFVDNIFRFTQAGSEVSALLGRIPSAVGYQPTLATDMGALQERITTTTKGSITSVQAIYVPADDLTDPAPATSFAHLDATTVLSRAISEKGIYPAVDPLDSTSRMLDPQIVGEEHYQVARAVQQTLQRYKSLQDIIAILGMDELSEEDKLTVARARKIERFLSQPFFVAEVFTGSPGKLVDLQDTIKGFKGLVEGEYDHLPEAAFYMVGTIEDAIEKAERLAAEAA.

A compositionally biased stretch (low complexity) spans 1-26; the sequence is MAKAATPKRAPARAAAIPAAATPAAK. Positions 1 to 40 are disordered; the sequence is MAKAATPKRAPARAAAIPAAATPAAKPAKRASTRSAAARS. 197 to 204 contacts ATP; it reads GGAGVGKT.

This sequence belongs to the ATPase alpha/beta chains family. F-type ATPases have 2 components, CF(1) - the catalytic core - and CF(0) - the membrane proton channel. CF(1) has five subunits: alpha(3), beta(3), gamma(1), delta(1), epsilon(1). CF(0) has three main subunits: a(1), b(2) and c(9-12). The alpha and beta chains form an alternating ring which encloses part of the gamma chain. CF(1) is attached to CF(0) by a central stalk formed by the gamma and epsilon chains, while a peripheral stalk is formed by the delta and b chains.

Its subcellular location is the cell inner membrane. It carries out the reaction ATP + H2O + 4 H(+)(in) = ADP + phosphate + 5 H(+)(out). Produces ATP from ADP in the presence of a proton gradient across the membrane. The catalytic sites are hosted primarily by the beta subunits. In Chelativorans sp. (strain BNC1), this protein is ATP synthase subunit beta.